Here is a 234-residue protein sequence, read N- to C-terminus: Ubiquitin domain-containing protein 1 (234 aa).

The interval 1–47 (MGGCVGTHHDSSGSLNENSDGTGVALGRNQPLKKDKPKWKSDYPMTD) is disordered. The span at 12–21 (SGSLNENSDG) shows a compositional bias: polar residues. Basic and acidic residues predominate over residues 32–41 (LKKDKPKWKS). A Ubiquitin-like domain is found at 152-227 (CQLRLRLSTG…VQVIVSQPIP (76 aa)).

In terms of biological role, may be involved in the regulation of cellular senescence through a positive feedback loop with TP53. The sequence is that of Ubiquitin domain-containing protein 1 (ubtd1) from Xenopus laevis (African clawed frog).